The following is a 166-amino-acid chain: Small ribosomal subunit protein uS5 (166 aa).

An S5 DRBM domain is found at 12-75 (YIEKLVQVNR…EAARRNMIQV (64 aa)).

Belongs to the universal ribosomal protein uS5 family. In terms of assembly, part of the 30S ribosomal subunit. Contacts proteins S4 and S8.

Functionally, with S4 and S12 plays an important role in translational accuracy. Located at the back of the 30S subunit body where it stabilizes the conformation of the head with respect to the body. The sequence is that of Small ribosomal subunit protein uS5 from Pseudomonas fluorescens (strain SBW25).